The sequence spans 229 residues: Type III pantothenate kinase (229 aa).

An ATP-binding site is contributed by 6 to 13 (NIGNSRQH). Substrate contacts are provided by residues Y77 and 81 to 84 (GIDR). Residue D83 is the Proton acceptor of the active site. D103 contributes to the K(+) binding site. An ATP-binding site is contributed by T106. T159 provides a ligand contact to substrate.

The protein belongs to the type III pantothenate kinase family. Homodimer. Requires NH4(+) as cofactor. K(+) is required as a cofactor.

Its subcellular location is the cytoplasm. It carries out the reaction (R)-pantothenate + ATP = (R)-4'-phosphopantothenate + ADP + H(+). It functions in the pathway cofactor biosynthesis; coenzyme A biosynthesis; CoA from (R)-pantothenate: step 1/5. In terms of biological role, catalyzes the phosphorylation of pantothenate (Pan), the first step in CoA biosynthesis. The sequence is that of Type III pantothenate kinase from Gloeobacter violaceus (strain ATCC 29082 / PCC 7421).